The sequence spans 360 residues: DNA replication and repair protein RecF (360 aa).

Residue 30–37 (GQNGSGKT) coordinates ATP.

The protein belongs to the RecF family.

The protein localises to the cytoplasm. In terms of biological role, the RecF protein is involved in DNA metabolism; it is required for DNA replication and normal SOS inducibility. RecF binds preferentially to single-stranded, linear DNA. It also seems to bind ATP. This chain is DNA replication and repair protein RecF, found in Shewanella loihica (strain ATCC BAA-1088 / PV-4).